The chain runs to 547 residues: Delta-guaiene synthase 1 (547 aa).

Positions 299, 303, and 444 each coordinate Mg(2+). A DDXXD motif motif is present at residues 299–303 (DDTYD).

This sequence belongs to the terpene synthase family. It depends on Mg(2+) as a cofactor.

It catalyses the reaction (2E,6E)-farnesyl diphosphate = delta-guaiene + diphosphate. It carries out the reaction (2E,6E)-farnesyl diphosphate = alpha-guaiene + diphosphate. It functions in the pathway secondary metabolite biosynthesis; terpenoid biosynthesis. In terms of biological role, sesquiterpene synthase involved in the biosynthesis of delta-guaiene (81.2%) and alpha-guaiene (18.1%), two structures composed of five- and seven-membered rings. Also produces 0.7% of alpha-humulene. The sequence is that of Delta-guaiene synthase 1 (C2) from Aquilaria crassna (Eagle wood).